The primary structure comprises 469 residues: Citrate synthase, mitochondrial (469 aa).

The transit peptide at 1 to 30 directs the protein to the mitochondrion; the sequence is MSFLTVSRLAPKLLNSKNATYFLVAARNAS. Catalysis depends on residues H304 and H350. An oxaloacetate-binding site is contributed by R359. Residue D405 is part of the active site. Residues R431 and R451 each contribute to the oxaloacetate site.

It belongs to the citrate synthase family. As to quaternary structure, homodimer.

It localises to the mitochondrion matrix. The enzyme catalyses oxaloacetate + acetyl-CoA + H2O = citrate + CoA + H(+). Its pathway is carbohydrate metabolism; tricarboxylic acid cycle; isocitrate from oxaloacetate: step 1/2. In terms of biological role, key enzyme of the Krebs tricarboxylic acid cycle which catalyzes the synthesis of citrate from acetyl coenzyme A and oxaloacetate. This is Citrate synthase, mitochondrial (cs) from Kajikia audax (Striped marlin).